The chain runs to 378 residues: Signal peptide peptidase (378 aa).

The interval 1-27 (MDSAVSDPHNGSAEAGTPANGTTRPPS) is disordered. Residues 1 to 31 (MDSAVSDPHNGSAEAGTPANGTTRPPSTPEG) lie on the Lumenal side of the membrane. Asn-10 and Asn-20 each carry an N-linked (GlcNAc...) asparagine glycan. The helical transmembrane segment at 32-52 (IALAYGSLLLMALLPIFFGAL) threads the bilayer. At 53–77 (RSVRCARGKSSSDMPETITSRDAAR) the chain is on the cytoplasmic side. The helical transmembrane segment at 78–98 (FPIIASCTLLGLYLFFKIFSQ) threads the bilayer. Topologically, residues 99-100 (EY) are lumenal. The chain crosses the membrane as a helical span at residues 101-121 (INLLLSMYFFVLGILALSHTI). The Cytoplasmic portion of the chain corresponds to 122–157 (SPFMNKFFPANFPNRQYQLLFTQGSGENKEEIINYE). Residues 158 to 178 (FDTKDLVCLGLSSVVGVWYLL) form a helical membrane-spanning segment. The Lumenal segment spans residues 179 to 181 (RKH). The chain crosses the membrane as a helical span at residues 182–202 (WIANNLFGLAFSLNGVELLHL). Topologically, residues 203–209 (NNVSTGC) are cytoplasmic. Residues 210–230 (ILLGGLFIYDIFWVFGTNVMV) traverse the membrane as a helical segment. Asp-219 is an active-site residue. At 231-256 (TVAKSFEAPIKLVFPQDLLEKGLEAD) the chain is on the lumenal side. Residues 257-277 (NFAMLGLGDIVIPGIFIALLL) traverse the membrane as a helical segment. Asp-265 is an active-site residue. At 278–290 (RFDISLKKNTHTY) the chain is on the cytoplasmic side. Residues 291 to 311 (FYTSFAAYIFGLGLTIFIMHI) traverse the membrane as a helical segment. The Lumenal segment spans residues 312 to 314 (FKH). A helical transmembrane segment spans residues 315-335 (AQPALLYLVPACIGFPVLVAL). Positions 317–319 (PAL) match the PAL motif. Topologically, residues 336–378 (AKGEVAEMFSYEESNPKDPAAETESKEESTEASASKRLEKKEK) are cytoplasmic. Residues 346–378 (YEESNPKDPAAETESKEESTEASASKRLEKKEK) form a disordered region. Over residues 349 to 378 (SNPKDPAAETESKEESTEASASKRLEKKEK) the composition is skewed to basic and acidic residues. Ser-368 is subject to Phosphoserine.

The protein belongs to the peptidase A22B family. In terms of assembly, monomer. Homodimer. Interacts with RNF139. Interacts with DERL1 and XBP1 isoform 1. Widely expressed with highest levels in liver and kidney. In the brain, expressed predominantly in hippocampus, amygdala, piriform cortex, choroid plexus and arcuate nucleus of the hypothalamic area. Isoform 1 is more strongly expressed than isoform 4 in most tissues except brain and skeletal muscle where isoform 4 is the dominant isoform and in testis where isoform 1 and isoform 4 are expressed at similar levels. In the brain, isoform 4 is not detected in the choroid plexus.

It is found in the endoplasmic reticulum membrane. The protein resides in the membrane. The protein localises to the cell membrane. Catalyzes intramembrane proteolysis of signal peptides that have been removed from precursors of secretory and membrane proteins, resulting in the release of the fragment from the ER membrane into the cytoplasm. Required to generate lymphocyte cell surface (HLA-E) epitopes derived from MHC class I signal peptides. Involved in the intramembrane cleavage of the integral membrane protein PSEN1. Cleaves the integral membrane protein XBP1 isoform 1 in a DERL1/RNF139-dependent manner. May play a role in graft rejection. This Mus musculus (Mouse) protein is Signal peptide peptidase.